A 366-amino-acid chain; its full sequence is Chorismate synthase (366 aa).

Positions 48 and 54 each coordinate NADP(+). Residues 125-127 (RSS), 238-239 (NA), G278, 293-297 (KPTSS), and R319 contribute to the FMN site.

Belongs to the chorismate synthase family. As to quaternary structure, homotetramer. The cofactor is FMNH2.

The catalysed reaction is 5-O-(1-carboxyvinyl)-3-phosphoshikimate = chorismate + phosphate. It participates in metabolic intermediate biosynthesis; chorismate biosynthesis; chorismate from D-erythrose 4-phosphate and phosphoenolpyruvate: step 7/7. Catalyzes the anti-1,4-elimination of the C-3 phosphate and the C-6 proR hydrogen from 5-enolpyruvylshikimate-3-phosphate (EPSP) to yield chorismate, which is the branch point compound that serves as the starting substrate for the three terminal pathways of aromatic amino acid biosynthesis. This reaction introduces a second double bond into the aromatic ring system. The sequence is that of Chorismate synthase from Neisseria meningitidis serogroup B (strain ATCC BAA-335 / MC58).